A 228-amino-acid polypeptide reads, in one-letter code: Glyceraldehyde 3-phosphate phosphatase (228 aa).

This sequence belongs to the HAD-like hydrolase superfamily. Mg(2+) is required as a cofactor.

Its function is as follows. Catalyzes the dephosphorylation of D,L-glyceraldehyde 3-phosphate in vitro. The sequence is that of Glyceraldehyde 3-phosphate phosphatase from Methanocaldococcus jannaschii (strain ATCC 43067 / DSM 2661 / JAL-1 / JCM 10045 / NBRC 100440) (Methanococcus jannaschii).